We begin with the raw amino-acid sequence, 601 residues long: Elongation factor 4 (601 aa).

The region spanning 7 to 189 (KNIRNFSIVA…AIVTRLPPPQ (183 aa)) is the tr-type G domain. GTP is bound by residues 19–24 (DHGKST) and 136–139 (NKID).

The protein belongs to the TRAFAC class translation factor GTPase superfamily. Classic translation factor GTPase family. LepA subfamily.

The protein resides in the cell inner membrane. The enzyme catalyses GTP + H2O = GDP + phosphate + H(+). Required for accurate and efficient protein synthesis under certain stress conditions. May act as a fidelity factor of the translation reaction, by catalyzing a one-codon backward translocation of tRNAs on improperly translocated ribosomes. Back-translocation proceeds from a post-translocation (POST) complex to a pre-translocation (PRE) complex, thus giving elongation factor G a second chance to translocate the tRNAs correctly. Binds to ribosomes in a GTP-dependent manner. This Methylocella silvestris (strain DSM 15510 / CIP 108128 / LMG 27833 / NCIMB 13906 / BL2) protein is Elongation factor 4.